The chain runs to 447 residues: ATP synthase subunit beta (447 aa).

147–154 (GGAGVGKT) is a binding site for ATP.

The protein belongs to the ATPase alpha/beta chains family. F-type ATPases have 2 components, CF(1) - the catalytic core - and CF(0) - the membrane proton channel. CF(1) has five subunits: alpha(3), beta(3), gamma(1), delta(1), epsilon(1). CF(0) has three main subunits: a(1), b(2) and c(9-12). The alpha and beta chains form an alternating ring which encloses part of the gamma chain. CF(1) is attached to CF(0) by a central stalk formed by the gamma and epsilon chains, while a peripheral stalk is formed by the delta and b chains.

The protein localises to the cell membrane. The catalysed reaction is ATP + H2O + 4 H(+)(in) = ADP + phosphate + 5 H(+)(out). Produces ATP from ADP in the presence of a proton gradient across the membrane. The catalytic sites are hosted primarily by the beta subunits. This chain is ATP synthase subunit beta, found in Carsonella ruddii (strain PV).